The following is a 354-amino-acid chain: Histone-lysine N-methyltransferase SUVR3 (354 aa).

In terms of domain architecture, Pre-SET spans 143–188 (SGCECERCEEGYCKCLAFAGMEEIANECGSGCGCGSDCSNRVTQKG). Zn(2+) contacts are provided by Cys145, Cys147, Cys150, Cys155, Cys157, Cys170, Cys174, Cys176, and Cys180. Residues 191-323 (VSLKIVRDEK…AEEELSFSYG (133 aa)) enclose the SET domain. S-adenosyl-L-methionine contacts are provided by residues 201-203 (KGW) and 281-282 (NH). Cys284 contacts Zn(2+). Tyr322 is an S-adenosyl-L-methionine binding site. Positions 334 to 350 (DKLNCSCGSSCCLGTLP) constitute a Post-SET domain. Residues Cys338, Cys340, and Cys345 each coordinate Zn(2+).

It belongs to the class V-like SAM-binding methyltransferase superfamily.

Its subcellular location is the nucleus. The protein resides in the chromosome. The enzyme catalyses L-lysyl-[histone] + S-adenosyl-L-methionine = N(6)-methyl-L-lysyl-[histone] + S-adenosyl-L-homocysteine + H(+). Histone methyltransferase. The sequence is that of Histone-lysine N-methyltransferase SUVR3 (SUVR3) from Arabidopsis thaliana (Mouse-ear cress).